We begin with the raw amino-acid sequence, 287 residues long: Inorganic pyrophosphatase (287 aa).

Residue arginine 79 coordinates diphosphate. Aspartate 116, aspartate 121, and aspartate 153 together coordinate Mg(2+).

This sequence belongs to the PPase family. Mg(2+) serves as cofactor.

The protein localises to the cytoplasm. It catalyses the reaction diphosphate + H2O = 2 phosphate + H(+). This Zygosaccharomyces bailii protein is Inorganic pyrophosphatase (IPP1).